The chain runs to 480 residues: ATP synthase subunit beta (480 aa).

Position 158–165 (158–165 (GGAGVGKT)) interacts with ATP.

It belongs to the ATPase alpha/beta chains family. F-type ATPases have 2 components, CF(1) - the catalytic core - and CF(0) - the membrane proton channel. CF(1) has five subunits: alpha(3), beta(3), gamma(1), delta(1), epsilon(1). CF(0) has three main subunits: a(1), b(2) and c(9-12). The alpha and beta chains form an alternating ring which encloses part of the gamma chain. CF(1) is attached to CF(0) by a central stalk formed by the gamma and epsilon chains, while a peripheral stalk is formed by the delta and b chains.

It localises to the cell inner membrane. The enzyme catalyses ATP + H2O + 4 H(+)(in) = ADP + phosphate + 5 H(+)(out). In terms of biological role, produces ATP from ADP in the presence of a proton gradient across the membrane. The catalytic sites are hosted primarily by the beta subunits. This chain is ATP synthase subunit beta, found in Acidobacterium capsulatum (strain ATCC 51196 / DSM 11244 / BCRC 80197 / JCM 7670 / NBRC 15755 / NCIMB 13165 / 161).